A 242-amino-acid polypeptide reads, in one-letter code: Peptidase E (242 aa).

Active-site charge relay system residues include Ser-123, Asp-138, and His-160.

This sequence belongs to the peptidase S51 family.

The protein resides in the cytoplasm. It carries out the reaction Dipeptidase E catalyzes the hydrolysis of dipeptides Asp-|-Xaa. It does not act on peptides with N-terminal Glu, Asn or Gln, nor does it cleave isoaspartyl peptides.. In terms of biological role, hydrolyzes dipeptides containing N-terminal aspartate residues. May play a role in allowing the cell to use peptide aspartate to spare carbon otherwise required for the synthesis of the aspartate family of amino acids. This chain is Peptidase E, found in Nostoc sp. (strain PCC 7120 / SAG 25.82 / UTEX 2576).